The following is a 447-amino-acid chain: MSQNHTILQSLPVGQKVGIAFSGGLDTSAALLWMKLKGALPYAYTANLGQPDEDDYNAIPKKAMEYGAENARLIDCRAQLAHEGIAAIQCGAFHVSTGGIAYFNTTPLGRAVTGTMLVSAMKEDDVNIWGDGSTYKGNDIERFYRYGLLTNPALKIYKPWLDQQFIDELGGRHEMSEFLIANGFNYKMSVEKAYSTDSNMLGATHEAKDLEFLNSGIKIVKPIMGVAFWDENVEVSPEEVSVRFEEGVPVALNGKEYADPVELFLEANRIGGRHGLGMSDQIENRIIEAKSRGIYEAPGMALFHIAYERLVTGIHNEDTIEQYRINGLRLGRLLYQGRWFDSQALMLRETAQRWVAKAVTGEVTLELRRGNDYSILNTESPNLTYQPERLSMEKVEDAAFTPLDRIGQLTMRNLDITDTRVKLGIYSQSGLLSLGEGSVLPQLGNKQ.

ATP is bound by residues 20–28 and alanine 46; that span reads AFSGGLDTS. Tyrosine 102 provides a ligand contact to L-citrulline. Residues glycine 132 and threonine 134 each contribute to the ATP site. The L-aspartate site is built by threonine 134, asparagine 138, and aspartate 139. Position 138 (asparagine 138) interacts with L-citrulline. Residue aspartate 139 participates in ATP binding. The L-citrulline site is built by arginine 142 and serine 195. Aspartate 197 provides a ligand contact to ATP. Positions 204, 206, and 283 each coordinate L-citrulline.

The protein belongs to the argininosuccinate synthase family. Type 2 subfamily. As to quaternary structure, homotetramer.

Its subcellular location is the cytoplasm. It catalyses the reaction L-citrulline + L-aspartate + ATP = 2-(N(omega)-L-arginino)succinate + AMP + diphosphate + H(+). It functions in the pathway amino-acid biosynthesis; L-arginine biosynthesis; L-arginine from L-ornithine and carbamoyl phosphate: step 2/3. The polypeptide is Argininosuccinate synthase (argG) (Neisseria meningitidis serogroup B (strain ATCC BAA-335 / MC58)).